Here is a 151-residue protein sequence, read N- to C-terminus: Nucleoside diphosphate kinase (151 aa).

ATP contacts are provided by K11, F59, R87, R104, and N114. H117 functions as the Pros-phosphohistidine intermediate in the catalytic mechanism.

It belongs to the NDK family. As to quaternary structure, homotrimer. It depends on Mg(2+) as a cofactor.

It carries out the reaction a 2'-deoxyribonucleoside 5'-diphosphate + ATP = a 2'-deoxyribonucleoside 5'-triphosphate + ADP. The enzyme catalyses a ribonucleoside 5'-diphosphate + ATP = a ribonucleoside 5'-triphosphate + ADP. In terms of biological role, major role in the synthesis of nucleoside triphosphates other than ATP. The ATP gamma phosphate is transferred to the NDP beta phosphate via a ping-pong mechanism, using a phosphorylated active-site intermediate. In Schizosaccharomyces pombe (strain 972 / ATCC 24843) (Fission yeast), this protein is Nucleoside diphosphate kinase (ndk1).